A 206-amino-acid polypeptide reads, in one-letter code: Cytidylate kinase (206 aa).

7–15 (GVAASGKSS) is an ATP binding site.

Belongs to the cytidylate kinase family. Type 1 subfamily.

The protein resides in the cytoplasm. It catalyses the reaction CMP + ATP = CDP + ADP. The enzyme catalyses dCMP + ATP = dCDP + ADP. The protein is Cytidylate kinase of Deinococcus radiodurans (strain ATCC 13939 / DSM 20539 / JCM 16871 / CCUG 27074 / LMG 4051 / NBRC 15346 / NCIMB 9279 / VKM B-1422 / R1).